We begin with the raw amino-acid sequence, 165 residues long: Neuritin-like protein (165 aa).

The N-terminal stretch at Met1–Ala35 is a signal peptide. Ala139 carries the GPI-anchor amidated alanine lipid modification. A propeptide spans Pro140–Ala165 (removed in mature form).

The protein belongs to the neuritin family.

It is found in the cell membrane. This is Neuritin-like protein (NRN1L) from Homo sapiens (Human).